Consider the following 639-residue polypeptide: UvrABC system protein C (639 aa).

Residues 20–97 (ERSGVYRMFD…IKKFQPKFNI (78 aa)) form the GIY-YIG domain. Residues 207–242 (KELQENLSRKMEELSSQMRFEEAAEIRDRIKALSYV) form the UVR domain.

This sequence belongs to the UvrC family. As to quaternary structure, interacts with UvrB in an incision complex.

Its subcellular location is the cytoplasm. Its function is as follows. The UvrABC repair system catalyzes the recognition and processing of DNA lesions. UvrC both incises the 5' and 3' sides of the lesion. The N-terminal half is responsible for the 3' incision and the C-terminal half is responsible for the 5' incision. This chain is UvrABC system protein C, found in Rickettsia conorii (strain ATCC VR-613 / Malish 7).